The primary structure comprises 413 residues: Cell division protein FtsZ 2 (413 aa).

GTP contacts are provided by residues 132–134 (GTG), Glu171, Arg175, and Asp218.

The protein belongs to the FtsZ family. Homodimer. Polymerizes to form a dynamic ring structure in a strictly GTP-dependent manner. Interacts directly with several other division proteins.

Its subcellular location is the cytoplasm. In terms of biological role, essential cell division protein that forms a contractile ring structure (Z ring) at the future cell division site. The regulation of the ring assembly controls the timing and the location of cell division. One of the functions of the FtsZ ring is to recruit other cell division proteins to the septum to produce a new cell wall between the dividing cells. Binds GTP and shows GTPase activity. The protein is Cell division protein FtsZ 2 of Thermococcus kodakarensis (strain ATCC BAA-918 / JCM 12380 / KOD1) (Pyrococcus kodakaraensis (strain KOD1)).